The sequence spans 418 residues: Odorant receptor 13a (418 aa).

The Cytoplasmic portion of the chain corresponds to 1-38; it reads MFYSYPYKALSFPIQCVWLKLNGSWPLTESSRPWRSQS. Residues 39 to 59 traverse the membrane as a helical segment; that stretch reads LLATAYIVWAWYVIASVGITI. Over 60 to 70 the chain is Extracellular; it reads SYQTAFLLNNL. Asn-69 carries an N-linked (GlcNAc...) asparagine glycan. The helical transmembrane segment at 71–91 threads the bilayer; that stretch reads SDIIITTENCCTTFMGVLNFV. The Cytoplasmic segment spans residues 92–140; sequence RLIHLRLNQRKFRQLIENFSYEIWIPNSSKNNVAAECRRRMVTFSIMTS. The helical transmembrane segment at 141 to 161 threads the bilayer; sequence LLACLIIMYCVLPLVEIFFGP. Residues 162–195 lie on the Extracellular side of the membrane; that stretch reads AFDAQNKPFPYKMIFPYDAQSSWIRYVMTYIFTS. The helical transmembrane segment at 196–216 threads the bilayer; sequence YAGICVVTTLFAEDTILGFFI. Residues 217–273 are Cytoplasmic-facing; that stretch reads TYTCGQFHLLHQRIAGLFAGSNAELAESIQLERLKRIVEKHNNIISFAKRLEDFFNP. A helical membrane pass occupies residues 274-294; sequence ILLANLMISSVLICMVGFQIV. The Extracellular segment spans residues 295–299; it reads TGKNM. A helical transmembrane segment spans residues 300–320; that stretch reads FIGDYVKFIIYISSALSQLYV. The Cytoplasmic segment spans residues 321–385; sequence LCENGDALIK…PVRITAFKFS (65 aa). The chain crosses the membrane as a helical span at residues 386–406; that stretch reads TLSLQSFTAILSTSISYFTLL. Residues 407-418 are Extracellular-facing; the sequence is RSVYFDDEKKLD.

The protein belongs to the insect chemoreceptor superfamily. Heteromeric odorant receptor channel (TC 1.A.69) family. Or1a subfamily. As to quaternary structure, interacts with Orco. Complexes exist early in the endomembrane system in olfactory sensory neurons (OSNs), coupling these complexes to the conserved ciliary trafficking pathway. In terms of tissue distribution, expressed in olfactory sensory neurons in the antenna.

The protein localises to the cell membrane. Its function is as follows. Odorant receptor which mediates acceptance or avoidance behavior, depending on its substrates. The odorant receptor repertoire encodes a large collection of odor stimuli that vary widely in identity, intensity, and duration. May form a complex with Orco to form odorant-sensing units, providing sensitive and prolonged odorant signaling and calcium permeability. Involved in the behavioral responses to octanol, nonanol, and pentyl acetate. The polypeptide is Odorant receptor 13a (Or13a) (Drosophila melanogaster (Fruit fly)).